Reading from the N-terminus, the 427-residue chain is MGSVRTNRYSIVSSEEDGMKLATLAVANGFGNGKSKVHTRQQCRSRFVKKDGHCNVQFINVGEKGQRYLADIFTTCVDIRWRWMLVIFCLAFVLSWLFFGCVFWLIALLHGDLDASKESKACVSEVNSFTAAFLFSIETQTTIGYGFRCVTDECPIAVFMVVFQSIVGCIIDAFIIGAVMAKMAKPKKRNETLVFSHNAVIAMRDGKLCLMWRVGNLRKSHLVEAHVRAQLLKSRITSEGEYIPLDQIDINVGFDSGIDRIFLVSPITIVHEIDEDSPLYDLSKQDIDNADFEIVVILEGMVEATAMTTQCRSSYLANEILWGHRYEPVLFEEKHYYKVDYSRFHKTYEVPNTPLCSARDLAEKKYILSNANSFCYENEVALTSKEEDDSENGVPESTSTDTPPDIDLHNQASVPLEPRPLRRESEI.

The Cytoplasmic segment spans residues 1-81 (MGSVRTNRYS…IFTTCVDIRW (81 aa)). Position 76 is an S-nitrosocysteine (Cys76). A helical membrane pass occupies residues 82–106 (RWMLVIFCLAFVLSWLFFGCVFWLI). Over 107–128 (ALLHGDLDASKESKACVSEVNS) the chain is Extracellular. An intramembrane region (helical; Pore-forming) is located at residues 129–140 (FTAAFLFSIETQ). An intramembrane region (pore-forming) is located at residues 141-147 (TTIGYGF). Positions 142–147 (TIGYGF) match the Selectivity filter motif. The Extracellular segment spans residues 148–156 (RCVTDECPI). A helical transmembrane segment spans residues 157 to 178 (AVFMVVFQSIVGCIIDAFIIGA). Residues 179-427 (VMAKMAKPKK…PRPLRRESEI (249 aa)) lie on the Cytoplasmic side of the membrane. A polyphosphoinositide (PIP2)-binding region spans residues 181–208 (AKMAKPKKRNETLVFSHNAVIAMRDGKL). Residues 384–427 (SKEEDDSENGVPESTSTDTPPDIDLHNQASVPLEPRPLRRESEI) form a disordered region. The PDZ-binding signature appears at 425-427 (SEI).

Belongs to the inward rectifier-type potassium channel (TC 1.A.2.1) family. KCNJ2 subfamily. As to quaternary structure, homotetramer. Homomultimeric and heteromultimeric association with KCNJ4/Kir2.3. Can form heteromeric channels with Kir2.6/KCNJ18. Associates, via its PDZ-recognition domain, with a complex containing LIN7A, LIN7B, LIN7C, DLG1, CASK and APBA1. Post-translationally, S-nitrosylation increases the open probability and inward rectifying currents.

The protein resides in the cell membrane. Its subcellular location is the sarcolemma. It localises to the T-tubule. It carries out the reaction K(+)(in) = K(+)(out). Its activity is regulated as follows. Activated by phosphatidylinositol 4,5 biphosphate (PtdIns(4,5)P2). In terms of biological role, inward rectifier potassium channels are characterized by a greater tendency to allow potassium to flow into the cell rather than out of it. Their voltage dependence is regulated by the concentration of extracellular potassium; as external potassium is raised, the voltage range of the channel opening shifts to more positive voltages. The inward rectification is mainly due to the blockage of outward current by internal magnesium. Can be blocked by extracellular barium and cesium. Probably participates in establishing action potential waveform and excitability of neuronal and muscle tissues. This is Inward rectifier potassium channel 2 (KCNJ2) from Sus scrofa (Pig).